Here is a 118-residue protein sequence, read N- to C-terminus: Group 1 truncated hemoglobin GlbN (118 aa).

Residue His-70 coordinates heme.

The protein belongs to the truncated hemoglobin family. Group I subfamily. Monomer. The cofactor is heme.

It localises to the membrane. This Nostoc sp. (strain MUN 8820) protein is Group 1 truncated hemoglobin GlbN (glbN).